We begin with the raw amino-acid sequence, 247 residues long: Chaperone protein AfaB (247 aa).

An N-terminal signal peptide occupies residues 1 to 29; that stretch reads MKMRAVAVFTGMLTGVLSVAGLLSAGAYA.

This sequence belongs to the periplasmic pilus chaperone family.

The protein resides in the periplasm. Its function is as follows. Involved in the biogenesis of the AFA-III afimbrial adhesin. The sequence is that of Chaperone protein AfaB (afaB) from Escherichia coli.